The chain runs to 147 residues: DNA polymerase epsilon subunit 3 (147 aa).

A2 is subject to N-acetylalanine. Position 83 is a phosphothreonine (T83). The stretch at L85 to D146 forms a coiled coil. Over residues R93–D124 the composition is skewed to basic and acidic residues. The interval R93–N147 is disordered. At S122 the chain carries Phosphoserine. The span at E125 to N147 shows a compositional bias: acidic residues.

As to quaternary structure, component of the DNA polymerase epsilon complex consisting of four subunits: the catalytic subunit POLE and the accessory subunits POLE2, POLE3 and POLE4. Interaction with POLE4 is a prerequisite for further binding with POLE and POLE2. Heterodimer with CHRAC1; binds to DNA. Component of the CHRAC ISWI chromatin remodeling complex at least composed of SMARCA5/SNF2H, BAZ1A/ACF1, CHRAC1 and POLE3; the complex preferentially binds DNA through the CHRAC1-POLE3 heterodimer and possesses ATP-dependent nucleosome-remodeling activity. Within the complex, the heterodimer with CHRAC1 interacts with SMARCA5/SNF2H; the interaction is direct and enhances nucleosome sliding activity by the SMARCA5/SNF2H and BAZ1A/ACF1 interaction. Within the complex, the heterodimer with CHRAC1 interacts with BAZ1A/ACF1; the interactions are direct.

The protein resides in the nucleus. In terms of biological role, accessory component of the DNA polymerase epsilon complex. Participates in DNA repair and in chromosomal DNA replication. Forms a complex with CHRAC1 and binds naked DNA, which is then incorporated into chromatin, aided by the nucleosome-remodeling activity of ISWI/SNF2H and ACF1. Does not enhance nucleosome sliding activity of the ACF-5 ISWI chromatin remodeling complex. The chain is DNA polymerase epsilon subunit 3 (POLE3) from Bos taurus (Bovine).